We begin with the raw amino-acid sequence, 59 residues long: Gallinacin-14 (59 aa).

The N-terminal stretch at 1–18 is a signal peptide; that stretch reads MGIFLLFLVLLAVPQAAP. 3 cysteine pairs are disulfide-bonded: C25–C54, C32–C47, and C37–C55.

This sequence belongs to the beta-defensin family.

It localises to the secreted. The protein localises to the cytoplasmic granule. Its function is as follows. Has bactericidal activity. This chain is Gallinacin-14 (GAL14), found in Gallus gallus (Chicken).